A 230-amino-acid polypeptide reads, in one-letter code: uncharacterized protein (230 aa).

The first 16 residues, 1–16, serve as a signal peptide directing secretion; sequence MTCVNVCFFLFPPCHR. Transmembrane regions (helical) follow at residues 27–47, 118–138, 150–170, and 172–191; these read VDLL…IPLI, LFFF…FLFF, FPIL…LSFL, and SLSH…LRVF.

The protein resides in the cytoplasm. Its subcellular location is the nucleus membrane. This is an uncharacterized protein from Schizosaccharomyces pombe (strain 972 / ATCC 24843) (Fission yeast).